The primary structure comprises 479 residues: Caspase-8 (479 aa).

Positions 1–216 (MDFSRNLYDI…TISDSPREQD (216 aa)) are excised as a propeptide. DED domains follow at residues 2 to 80 (DFSR…TYLN) and 100 to 177 (AYRV…IIND). 2 positions are modified to phosphoserine: serine 188 and serine 211. N6-acetyllysine is present on lysine 224. The active site involves histidine 317. Position 334 is a phosphotyrosine (tyrosine 334). Cysteine 360 is a catalytic residue. Residues 375–384 (SEEQPYLEMD) constitute a propeptide that is removed on maturation. Tyrosine 380 carries the phosphotyrosine; by SRC modification. At serine 387 the chain carries Phosphoserine; by CDK1. Arginine 413 carries the (Microbial infection) ADP-riboxanated arginine modification.

This sequence belongs to the peptidase C14A family. As to quaternary structure, heterotetramer that consists of two anti-parallel arranged heterodimers, each one formed by a 18 kDa (p18) and a 10 kDa (p10) subunit. Component of the death-induced signaling complex (DISC) composed of cell surface receptor FAS/CD95 or TNFRSF1A, adapter protein FADD and the CASP8 protease; recruitment of CASP8 to the complex is required for processing of CASP8 into the p18 and p10 subunits. Component of the AIM2 PANoptosome complex, a multiprotein complex that drives inflammatory cell death (PANoptosis). Interacts with CFLAR and PEA15. Interacts with TNFAIP8L2. Interacts with CASP8AP2. Interacts with RFFL and RNF34; negatively regulate CASP8 through proteasomal degradation. Interacts with NOL3; decreases CASP8 activity in a mitochondria localization- and phosphorylation-dependent manner and this interaction is dissociated by calcium. Interacts with UBR2ca. Interacts with RIPK1. Interacts with stimulated TNFRSF10B; this interaction is followed by CASP8 proteolytic cleavage and activation. Interacts (phosphorylated on Tyr-380) with PIK3R1. In terms of assembly, interacts at the endoplasmic reticulum with a complex containing BCAP31, BAP29, BCL2 and/or BCL2L1. (Microbial infection) Interacts with human cytomegalovirus/HHV-5 protein vICA/UL36; this interaction inhibits CASP8 activation. As to quaternary structure, (Microbial infection) Interacts with NleF from pathogenic E.coli. In terms of assembly, (Microbial infection) Interacts with molluscum contagiosum virus protein MC160. (Microbial infection) Interacts (via RIP homotypic interaction motif) with herpes simplex virus 1/HHV-1 protein RIR1/ICP6 (via RIP homotypic interaction motif); this interaction prevents necroptosis activation. As to quaternary structure, (Microbial infection) Interacts (via RIP homotypic interaction motif) with herpes simplex virus 2/HHV-2 protein RIR1/ICP10 (via RIP homotypic interaction motif); this interaction prevents necroptosis activation. Generation of the p10 and p18 subunits requires association with the death-inducing signaling complex (DISC), whereas additional processing is likely due to the autocatalytic activity of the activated protease. GZMB and CASP10 can be involved in these processing events. Post-translationally, phosphorylation on Ser-387 during mitosis by CDK1 inhibits activation by proteolysis and prevents apoptosis. Phosphorylation on Tyr-380 by SRC is mediated by interaction with the SRC SH2 domain and does not affect dimerization or recruitment to the death-inducing signaling complex (DISC) but negatively regulates DISC-mediated processing and activation of CASP8, down-regulating its proapoptotic function. Phosphorylation on Tyr-380 also enhances localization to lamellipodia in migrating cells. In terms of processing, (Microbial infection) ADP-riboxanation by C.violaceum CopC blocks CASP8 processing, preventing CASP8 activation and ability to mediate extrinsic apoptosis. (Microbial infection) Proteolytically cleaved by the cowpox virus CRMA death inhibitory protein. In terms of tissue distribution, isoform 1, isoform 5 and isoform 7 are expressed in a wide variety of tissues. Highest expression in peripheral blood leukocytes, spleen, thymus and liver. Barely detectable in brain, testis and skeletal muscle.

It localises to the cytoplasm. It is found in the nucleus. Its subcellular location is the cell projection. The protein localises to the lamellipodium. It catalyses the reaction Strict requirement for Asp at position P1 and has a preferred cleavage sequence of (Leu/Asp/Val)-Glu-Thr-Asp-|-(Gly/Ser/Ala).. With respect to regulation, CASP8 activity is restricted by RIPK1. Inhibited by the effector protein NleF that is produced by pathogenic E.coli; this inhibits apoptosis. Thiol protease that plays a key role in programmed cell death by acting as a molecular switch for apoptosis, necroptosis and pyroptosis, and is required to prevent tissue damage during embryonic development and adulthood. Initiator protease that induces extrinsic apoptosis by mediating cleavage and activation of effector caspases responsible for FAS/CD95-mediated and TNFRSF1A-induced cell death. Cleaves and activates effector caspases CASP3, CASP4, CASP6, CASP7, CASP9 and CASP10. Binding to the adapter molecule FADD recruits it to either receptor FAS/TNFRSF6 or TNFRSF1A. The resulting aggregate called the death-inducing signaling complex (DISC) performs CASP8 proteolytic activation. The active dimeric enzyme is then liberated from the DISC and free to activate downstream apoptotic proteases. Proteolytic fragments of the N-terminal propeptide (termed CAP3, CAP5 and CAP6) are likely retained in the DISC. In addition to extrinsic apoptosis, also acts as a negative regulator of necroptosis: acts by cleaving RIPK1 at 'Asp-324', which is crucial to inhibit RIPK1 kinase activity, limiting TNF-induced apoptosis, necroptosis and inflammatory response. Also able to initiate pyroptosis by mediating cleavage and activation of gasdermin-C and -D (GSDMC and GSDMD, respectively): gasdermin cleavage promotes release of the N-terminal moiety that binds to membranes and forms pores, triggering pyroptosis. Initiates pyroptosis following inactivation of MAP3K7/TAK1. Also acts as a regulator of innate immunity by mediating cleavage and inactivation of N4BP1 downstream of TLR3 or TLR4, thereby promoting cytokine production. May participate in the Granzyme B (GZMB) cell death pathways. Cleaves PARP1 and PARP2. Independent of its protease activity, promotes cell migration following phosphorylation at Tyr-380. Its function is as follows. Lacks the catalytic site and may interfere with the pro-apoptotic activity of the complex. In terms of biological role, lacks the catalytic site and may interfere with the pro-apoptotic activity of the complex. Acts as an inhibitor of the caspase cascade. The protein is Caspase-8 of Homo sapiens (Human).